The chain runs to 305 residues: Homoserine O-acetyltransferase (305 aa).

The active-site Acyl-thioester intermediate is Cys142. Positions 163 and 192 each coordinate substrate. The active-site Proton acceptor is His235. Glu237 is a catalytic residue. Arg249 is a binding site for substrate.

It belongs to the MetA family.

Its subcellular location is the cytoplasm. The enzyme catalyses L-homoserine + acetyl-CoA = O-acetyl-L-homoserine + CoA. It participates in amino-acid biosynthesis; L-methionine biosynthesis via de novo pathway; O-acetyl-L-homoserine from L-homoserine: step 1/1. Functionally, transfers an acetyl group from acetyl-CoA to L-homoserine, forming acetyl-L-homoserine. The chain is Homoserine O-acetyltransferase from Bacteroides thetaiotaomicron (strain ATCC 29148 / DSM 2079 / JCM 5827 / CCUG 10774 / NCTC 10582 / VPI-5482 / E50).